The sequence spans 308 residues: Microtubule integrity protein mal3 (308 aa).

Residues 2–103 enclose the Calponin-homology (CH) domain; it reads SESRQELLAW…FVQWAKRFWD (102 aa). Residues 117–162 form a disordered region; it reads RGNRGPANTRVMNSSAGATGPSRRRQVSSGSSTPSMTKSSANNNNV. A compositionally biased stretch (low complexity) spans 144–162; the sequence is SSGSSTPSMTKSSANNNNV. Residues 173–247 enclose the EB1 C-terminal domain; it reads RAKQAQQQIT…LYSTEDGFEL (75 aa).

This sequence belongs to the MAPRE family. In terms of assembly, interacts with tea2.

It localises to the cytoplasm. Its subcellular location is the cytoskeleton. Functionally, may play a role in regulating the integrity of microtubules possibly by influencing their stability. Involved in an anchoring mechanism to maintain tea2 and tip1 at growing microtubule ends. Strongly stimulates the ATPase activity of tea2. This is Microtubule integrity protein mal3 (mal3) from Schizosaccharomyces pombe (strain 972 / ATCC 24843) (Fission yeast).